Consider the following 229-residue polypeptide: Potassium/proton antiporter CemA (229 aa).

The next 3 membrane-spanning stretches (helical) occupy residues 7–27 (LTPF…SLSF), 106–126 (IVLH…YYFL), and 189–209 (IISG…KYWI).

This sequence belongs to the CemA family.

It localises to the plastid. It is found in the chloroplast inner membrane. It catalyses the reaction K(+)(in) + H(+)(out) = K(+)(out) + H(+)(in). Its function is as follows. Contributes to K(+)/H(+) antiport activity by supporting proton efflux to control proton extrusion and homeostasis in chloroplasts in a light-dependent manner to modulate photosynthesis. Prevents excessive induction of non-photochemical quenching (NPQ) under continuous-light conditions. Indirectly promotes efficient inorganic carbon uptake into chloroplasts. The chain is Potassium/proton antiporter CemA from Calycanthus floridus var. glaucus (Eastern sweetshrub).